The chain runs to 432 residues: Adenylosuccinate synthetase (432 aa).

GTP is bound by residues 13–19 and 41–43; these read GDEGKGK and GHT. Aspartate 14 functions as the Proton acceptor in the catalytic mechanism. Mg(2+)-binding residues include aspartate 14 and glycine 41. IMP contacts are provided by residues 14–17, 39–42, threonine 130, arginine 144, glutamine 225, threonine 240, and arginine 304; these read DEGK and NAGH. The active-site Proton donor is the histidine 42. Substrate is bound at residue 300–306; sequence ATTGRRR. Residues arginine 306, 332 to 334, and 415 to 417 each bind GTP; these read KLD and STG.

This sequence belongs to the adenylosuccinate synthetase family. In terms of assembly, homodimer. It depends on Mg(2+) as a cofactor.

It localises to the cytoplasm. It carries out the reaction IMP + L-aspartate + GTP = N(6)-(1,2-dicarboxyethyl)-AMP + GDP + phosphate + 2 H(+). Its pathway is purine metabolism; AMP biosynthesis via de novo pathway; AMP from IMP: step 1/2. Its function is as follows. Plays an important role in the de novo pathway of purine nucleotide biosynthesis. Catalyzes the first committed step in the biosynthesis of AMP from IMP. This is Adenylosuccinate synthetase from Salmonella paratyphi A (strain AKU_12601).